The sequence spans 1058 residues: Carbamoyl phosphate synthase large chain (1058 aa).

The carboxyphosphate synthetic domain stretch occupies residues 1 to 399 (MPIDKDIKKV…AIQKAIRSLD (399 aa)). ATP is bound by residues arginine 127, arginine 167, glycine 173, glycine 174, glutamate 206, valine 208, glutamate 213, glycine 239, isoleucine 240, histidine 241, glutamine 282, and glutamate 296. The region spanning 131 to 325 (GHFMDKLNEP…IAKISSKIAL (195 aa)) is the ATP-grasp 1 domain. Mg(2+) is bound by residues glutamine 282, glutamate 296, and asparagine 298. Residues glutamine 282, glutamate 296, and asparagine 298 each contribute to the Mn(2+) site. The oligomerization domain stretch occupies residues 400 to 538 (MGHDGFEYVE…YSTYDSGNEL (139 aa)). The interval 539 to 924 (KSSNKKKIVI…YKSQLAAGMD (386 aa)) is carbamoyl phosphate synthetic domain. An ATP-grasp 2 domain is found at 663–856 (AKLLNKLHIH…LAKVATWIMT (194 aa)). Residues arginine 699, lysine 738, leucine 740, glutamate 745, glycine 770, valine 771, histidine 772, serine 773, glutamine 813, and glutamate 827 each contribute to the ATP site. Mg(2+)-binding residues include glutamine 813, glutamate 827, and asparagine 829. The Mn(2+) site is built by glutamine 813, glutamate 827, and asparagine 829. The MGS-like domain maps to 923 to 1058 (MDLPKEGKIF…KSLNEHIDGE (136 aa)). The interval 925–1058 (LPKEGKIFIS…KSLNEHIDGE (134 aa)) is allosteric domain.

The protein belongs to the CarB family. Composed of two chains; the small (or glutamine) chain promotes the hydrolysis of glutamine to ammonia, which is used by the large (or ammonia) chain to synthesize carbamoyl phosphate. Tetramer of heterodimers (alpha,beta)4. Mg(2+) serves as cofactor. Requires Mn(2+) as cofactor.

The enzyme catalyses hydrogencarbonate + L-glutamine + 2 ATP + H2O = carbamoyl phosphate + L-glutamate + 2 ADP + phosphate + 2 H(+). It catalyses the reaction hydrogencarbonate + NH4(+) + 2 ATP = carbamoyl phosphate + 2 ADP + phosphate + 2 H(+). It functions in the pathway amino-acid biosynthesis; L-arginine biosynthesis; carbamoyl phosphate from bicarbonate: step 1/1. The protein operates within pyrimidine metabolism; UMP biosynthesis via de novo pathway; (S)-dihydroorotate from bicarbonate: step 1/3. Its function is as follows. Large subunit of the glutamine-dependent carbamoyl phosphate synthetase (CPSase). CPSase catalyzes the formation of carbamoyl phosphate from the ammonia moiety of glutamine, carbonate, and phosphate donated by ATP, constituting the first step of 2 biosynthetic pathways, one leading to arginine and/or urea and the other to pyrimidine nucleotides. The large subunit (synthetase) binds the substrates ammonia (free or transferred from glutamine from the small subunit), hydrogencarbonate and ATP and carries out an ATP-coupled ligase reaction, activating hydrogencarbonate by forming carboxy phosphate which reacts with ammonia to form carbamoyl phosphate. The polypeptide is Carbamoyl phosphate synthase large chain (Methanobrevibacter smithii (strain ATCC 35061 / DSM 861 / OCM 144 / PS)).